The chain runs to 429 residues: UDP-N-acetylglucosamine 1-carboxyvinyltransferase (429 aa).

22-23 is a binding site for phosphoenolpyruvate; it reads KN. Position 102 (Arg-102) interacts with UDP-N-acetyl-alpha-D-glucosamine. The active-site Proton donor is Cys-126. Cys-126 carries the post-translational modification 2-(S-cysteinyl)pyruvic acid O-phosphothioketal. UDP-N-acetyl-alpha-D-glucosamine contacts are provided by residues 131–135, 171–174, Asp-316, and Ile-338; these read RPVDL and KVSV.

Belongs to the EPSP synthase family. MurA subfamily.

It localises to the cytoplasm. The catalysed reaction is phosphoenolpyruvate + UDP-N-acetyl-alpha-D-glucosamine = UDP-N-acetyl-3-O-(1-carboxyvinyl)-alpha-D-glucosamine + phosphate. It participates in cell wall biogenesis; peptidoglycan biosynthesis. Its function is as follows. Cell wall formation. Adds enolpyruvyl to UDP-N-acetylglucosamine. This is UDP-N-acetylglucosamine 1-carboxyvinyltransferase from Chelativorans sp. (strain BNC1).